The chain runs to 498 residues: Aminotransferase swnA (498 aa).

This sequence belongs to the class-I pyridoxal-phosphate-dependent aminotransferase family. The cofactor is pyridoxal 5'-phosphate.

It participates in mycotoxin biosynthesis. Its function is as follows. Aminotransferase; part of the gene cluster that mediates the biosynthesis of swainsonine (SW), a cytotoxic fungal alkaloid and a potential cancer therapy drug. Swainsonine production occurs via a multibranched pathway and is dispensable for fungal colonization of plants and infection of insect hosts. The first step of swainsonine biosynthesis is the production of the precursor pipecolic acid (PA) via conversion of L-lysine (Lys) to 1-piperideine-6-carboxylate (P6C) by the aminotransferase swnA, the latter being further reduced to PA by the reductase swnR. PA can be converted from lysine by both the SW biosynthetic cluster and the unclustered genes such as lysine cyclodeaminase. The PKS-NRPS hybrid synthetase swnK uptakes and condensates PA and malonyl-CoA with and without skipping of the ketoreductase (KR) domain in order to produce 3 intermediates, 1-oxoindolizidine, (1S)-1-hydroxyindolizin, and (1R)-1-hydroxyindolizine; with the transisomer (1S)-1-hydroxyindolizin being predominant. The terminal thioester reductase (TE) domain of swnK is involved in reduction of the thioester bond to release the intermediate aldehydes. The oxidoreductase swnN could contribute to the reduction of 1-oxoindolizidine to (1S)-1-hydroxyindolizin and (1R)-1-hydroxyindolizine, contributing to the major route of SW production. The dioxygenase swnH2 would be responsible for the oxidization of (1R)-1-hydroxyindolizine into (1R,2S)-1,2-dihydroxyindolizine and of (1S)-1-hydroxyindolizin to yield both (1R,2S)-1,2-dihydroxyindolizine and (1S,2S)-1,2-dihydroxyindolizine. The dioxygenase swnH1 then performs the conversion of the 1,2-dihydroxyindolizine epimers to SW. This is Aminotransferase swnA from Metarhizium robertsii (strain ARSEF 23 / ATCC MYA-3075) (Metarhizium anisopliae (strain ARSEF 23)).